The following is a 101-amino-acid chain: uncharacterized protein (101 aa).

This is an uncharacterized protein from Homo sapiens (Human).